The sequence spans 513 residues: Acyltransferase uat1 (513 aa).

H158 acts as the Proton acceptor in catalysis.

This sequence belongs to the plant acyltransferase family.

The protein operates within secondary metabolite biosynthesis. Its function is as follows. Acyltransferase; part of the gene cluster that mediates the biosynthesis of the glycolipid biosurfactant ustilagic acid (UA). UA is a secreted cellobiose glycolipid that is toxic for many microorganisms and confers biocontrol activity to U.maydis. UA consists of 15,16-dihydroxypalmitic or 2,15,16-trihydroxypalmitic acid, which is O-glycosidically linked to cellobiose at its terminal hydroxyl group. In addition, the cellobiose moiety is acetylated and acylated with a short-chain hydroxy fatty acid. UA biosynthesis starts with omega-hydroxylation of palmitic acid catalyzed by the cytochrome P450 monooxygenase cyp1. Terminal hydroxylation of palmitic acid precedes subterminal hydroxylation catalyzed by the cytochrome P450 monooxygenase cyp2. Sequential glucosylation of the hydroxy fatty acid is probably catalyzed by the glycosyltransferase ugt1. The cellobiose lipid is further decorated by acetylation of the proximal glucose residue and by acylation with a short-chain beta-hydroxy fatty acid at the distal glucose residue. The acyltransferase uat1 may be a good candidate for catalyzing either acetylation or acylation of the cellobiose lipid. The fatty acid synthase fas2 may be involved in synthesis of the carbon backbone of the short-chain beta-hydroxy fatty acid esterified to the cellobiose disaccharide. The secreted UA consists of a mixture of both alpha-hydroxylated and non-hydroxylated glycolipids; therefore, alpha-hydroxylation of the long-chain fatty, catalyzed by the fatty acid hydroxylase ahd1, occurs late in UA biosynthesis and may be the last step before secretion. This is Acyltransferase uat1 from Mycosarcoma maydis (Corn smut fungus).